The following is a 411-amino-acid chain: Methylthioribose-1-phosphate isomerase (411 aa).

At S2 the chain carries N-acetylserine. D280 functions as the Proton donor in the catalytic mechanism. The residue at position 351 (S351) is a Phosphoserine.

Belongs to the eIF-2B alpha/beta/delta subunits family. MtnA subfamily. As to quaternary structure, homodimer.

The protein resides in the cytoplasm. It localises to the nucleus. The catalysed reaction is 5-(methylsulfanyl)-alpha-D-ribose 1-phosphate = 5-(methylsulfanyl)-D-ribulose 1-phosphate. Its pathway is amino-acid biosynthesis; L-methionine biosynthesis via salvage pathway; L-methionine from S-methyl-5-thio-alpha-D-ribose 1-phosphate: step 1/6. Functionally, catalyzes the interconversion of methylthioribose-1-phosphate (MTR-1-P) into methylthioribulose-1-phosphate (MTRu-1-P). This Saccharomyces cerevisiae (strain JAY291) (Baker's yeast) protein is Methylthioribose-1-phosphate isomerase.